The primary structure comprises 147 residues: Protein-export protein SecB (147 aa).

This sequence belongs to the SecB family. As to quaternary structure, homotetramer, a dimer of dimers. One homotetramer interacts with 1 SecA dimer.

The protein localises to the cytoplasm. Functionally, one of the proteins required for the normal export of preproteins out of the cell cytoplasm. It is a molecular chaperone that binds to a subset of precursor proteins, maintaining them in a translocation-competent state. It also specifically binds to its receptor SecA. The protein is Protein-export protein SecB of Neisseria meningitidis serogroup C (strain 053442).